The primary structure comprises 388 residues: Succinyl-diaminopimelate desuccinylase (388 aa).

Residue His-71 coordinates Zn(2+). Asp-73 is a catalytic residue. Residue Asp-104 participates in Zn(2+) binding. Glu-143 functions as the Proton acceptor in the catalytic mechanism. The Zn(2+) site is built by Glu-144, Glu-172, and His-361.

It belongs to the peptidase M20A family. DapE subfamily. As to quaternary structure, homodimer. Zn(2+) is required as a cofactor. Co(2+) serves as cofactor.

The enzyme catalyses N-succinyl-(2S,6S)-2,6-diaminopimelate + H2O = (2S,6S)-2,6-diaminopimelate + succinate. Its pathway is amino-acid biosynthesis; L-lysine biosynthesis via DAP pathway; LL-2,6-diaminopimelate from (S)-tetrahydrodipicolinate (succinylase route): step 3/3. Its function is as follows. Catalyzes the hydrolysis of N-succinyl-L,L-diaminopimelic acid (SDAP), forming succinate and LL-2,6-diaminopimelate (DAP), an intermediate involved in the bacterial biosynthesis of lysine and meso-diaminopimelic acid, an essential component of bacterial cell walls. The protein is Succinyl-diaminopimelate desuccinylase of Bradyrhizobium diazoefficiens (strain JCM 10833 / BCRC 13528 / IAM 13628 / NBRC 14792 / USDA 110).